Consider the following 69-residue polypeptide: MFTMKKSLLLLFFLGTINLSLCEQERNAEEERRDDDEMDVEVEKRFLSTALKVAANVVPTLFCKITKKC.

A signal peptide spans 1-22; that stretch reads MFTMKKSLLLLFFLGTINLSLC. A propeptide spans 23-43 (removed in mature form); the sequence is EQERNAEEERRDDDEMDVEVE. An intrachain disulfide couples cysteine 63 to cysteine 69.

As to expression, expressed by the skin glands.

The protein localises to the secreted. Functionally, antimicrobial peptide. Active against Gram-positive bacteria R.rhodochrous X15 and B.licheniformis X39 and against Gram-negative bacterium E.coli ATCC 25922. Has antifungal activity against a slime mold isolate. Has weak hemolytic activity against human erythrocytes. The protein is Brevinin-1CG1 of Amolops chunganensis (Chungan torrent frog).